The sequence spans 420 residues: Putative competence-damage inducible protein (420 aa).

This sequence belongs to the CinA family.

In Halalkalibacterium halodurans (strain ATCC BAA-125 / DSM 18197 / FERM 7344 / JCM 9153 / C-125) (Bacillus halodurans), this protein is Putative competence-damage inducible protein.